The primary structure comprises 169 residues: Glycine-rich RNA-binding protein GRP2A (169 aa).

The RRM domain occupies 8–86; the sequence is YRCFVGGLAW…RSITVNEAQS (79 aa). Disordered regions lie at residues 69 to 100 and 125 to 169; these read MNGQ…GGGG and YSGG…GGGW. Gly residues predominate over residues 89–100; it reads SGAGGGGRGGGG.

Predominantly expressed in meristematic and growing tissue.

It is found in the nucleus. In terms of biological role, may play a general role in circadian phenomena associated with meristematic tissue. This is Glycine-rich RNA-binding protein GRP2A from Sinapis alba (White mustard).